Consider the following 129-residue polypeptide: uncharacterized protein (129 aa).

Positions 44 to 63 are disordered; it reads PYRAADRSNDQDNDRSGGNV. Residues 46–58 are compositionally biased toward basic and acidic residues; the sequence is RAADRSNDQDNDR. The next 2 helical transmembrane spans lie at 78-98 and 109-129; these read IISL…VGYI and AWAM…IPFF.

Its subcellular location is the cell membrane. This is an uncharacterized protein from Bacillus subtilis (strain 168).